Consider the following 494-residue polypeptide: DEAD-box ATP-dependent RNA helicase CshA (494 aa).

The short motif at 3–31 is the Q motif element; sequence ITFQDFNLSSDLMKAINRMGFEEATPIQA. The Helicase ATP-binding domain occupies 34–204; it reads IPLGLSNKDV…ERFMTEPEHV (171 aa). 47–54 contacts ATP; sequence AQTGTGKT. Positions 152–155 match the DEAD box motif; the sequence is DEAD. The region spanning 215 to 375 is the Helicase C-terminal domain; that stretch reads NIQQFYLEVQ…RMKEPTLDEA (161 aa). Positions 413-494 are required for dimerization or oligomerization; sequence VTVVAAAIKM…SGDRRQKKSY (82 aa). Residues 429 to 494 are disordered; it reads DTPVRLTDEA…SGDRRQKKSY (66 aa). The span at 443-452 shows a compositional bias: basic residues; sequence KRYKNQRSSK. A compositionally biased stretch (basic and acidic residues) spans 473-488; that stretch reads SYDKKRSNDRRSSGDR.

It belongs to the DEAD box helicase family. CshA subfamily. In terms of assembly, homodimer or oligomer. May interact with RNA helicases CshB and DbpA (DeaD). Probably a component of the RNA degradosome complex composed of rny, rnjA, rnjB, pnp, pfkA and eno, and possibly also rnpA (although rnjA and rnjB's presence is unclear). Interacts with ribosomal proteins L1 and L3 (rplA and rplC) and the protein component of RNase RnpA. Interacts with the RNA polymerase core. Mg(2+) serves as cofactor.

It localises to the cytoplasm. The protein resides in the nucleoid. It is found in the cell membrane. The catalysed reaction is ATP + H2O = ADP + phosphate + H(+). Its activity is regulated as follows. RNA helicase activity is inhibited by EDTA. Functionally, the most abundant DEAD-box RNA helicase. An ATP-dependent RNA helicase with RNA-dependent ATPase activity. May work in conjunction with the cold shock proteins to ensure proper initiation of transcription at low and optimal temperatures. In vitro, unwinds dsRNA in both 5'- and 3'- directions. Plays a role in ribosomal 50S subunit assembly. Its deletion leads to changes in mRNA levels for over 200 transcripts. The sequence is that of DEAD-box ATP-dependent RNA helicase CshA from Bacillus subtilis (strain 168).